A 433-amino-acid chain; its full sequence is 3-phosphoshikimate 1-carboxyvinyltransferase (433 aa).

Residues K23, S24, and R28 each coordinate 3-phosphoshikimate. K23 contacts phosphoenolpyruvate. 2 residues coordinate phosphoenolpyruvate: G95 and R123. 3-phosphoshikimate contacts are provided by S170, S171, Q172, S198, D317, and K344. Q172 serves as a coordination point for phosphoenolpyruvate. D317 acts as the Proton acceptor in catalysis. Phosphoenolpyruvate is bound by residues R348, R391, and K416.

It belongs to the EPSP synthase family. In terms of assembly, monomer.

Its subcellular location is the cytoplasm. The enzyme catalyses 3-phosphoshikimate + phosphoenolpyruvate = 5-O-(1-carboxyvinyl)-3-phosphoshikimate + phosphate. It functions in the pathway metabolic intermediate biosynthesis; chorismate biosynthesis; chorismate from D-erythrose 4-phosphate and phosphoenolpyruvate: step 6/7. Its function is as follows. Catalyzes the transfer of the enolpyruvyl moiety of phosphoenolpyruvate (PEP) to the 5-hydroxyl of shikimate-3-phosphate (S3P) to produce enolpyruvyl shikimate-3-phosphate and inorganic phosphate. The sequence is that of 3-phosphoshikimate 1-carboxyvinyltransferase from Neisseria meningitidis serogroup C / serotype 2a (strain ATCC 700532 / DSM 15464 / FAM18).